We begin with the raw amino-acid sequence, 155 residues long: Photosystem II extrinsic protein V (155 aa).

The signal sequence occupies residues 1–20; it reads MFVKMIGWLVLFLFAHQTWA. Positions 50, 53, 54, and 105 each coordinate heme c.

Belongs to the cytochrome c family. PsbV subfamily. PSII is composed of 1 copy each of membrane proteins PsbA, PsbB, PsbC, PsbD, PsbE, PsbF, PsbH, PsbI, PsbJ, PsbK, PsbL, PsbM, PsbT, PsbY, PsbZ, Psb30/Ycf12, at least 3 peripheral proteins of the oxygen-evolving complex and a large number of cofactors. It forms dimeric complexes. The extrinsic subunits in red algae are PsbO (OEC33), PsbQ', cytochrome c-550 and PsbU. Requires heme c as cofactor.

It localises to the plastid. The protein resides in the chloroplast thylakoid membrane. Its function is as follows. One of the extrinsic, lumenal subunits of photosystem II (PSII). PSII is a light-driven water plastoquinone oxidoreductase, using light energy to abstract electrons from H(2)O, generating a proton gradient subsequently used for ATP formation. The extrinsic proteins stabilize the structure of photosystem II oxygen-evolving complex (OEC), the ion environment of oxygen evolution and protect the OEC against heat-induced inactivation. Unlike the T.vulcanus ortholog, it does not bind by itself to PSII, but requires all extrinsic members of the OEC. This chain is Photosystem II extrinsic protein V, found in Cyanidium caldarium (Red alga).